Reading from the N-terminus, the 330-residue chain is tRNA-modifying protein YgfZ (330 aa).

Folate is bound by residues Trp28 and Trp190.

The protein belongs to the tRNA-modifying YgfZ family.

It is found in the cytoplasm. In terms of biological role, folate-binding protein involved in regulating the level of ATP-DnaA and in the modification of some tRNAs. It is probably a key factor in regulatory networks that act via tRNA modification, such as initiation of chromosomal replication. In Serratia proteamaculans (strain 568), this protein is tRNA-modifying protein YgfZ.